Consider the following 748-residue polypeptide: Sulfhydryl oxidase 1 (748 aa).

The first 32 residues, 1 to 32 (MRRCGRLSGPPSLLLLLLLLSPLLFSGPGAYA), serve as a signal peptide directing secretion. Residues 33 to 159 (ARLSVLYSSS…RMRLIDALES (127 aa)) form the Thioredoxin domain. Active-site nucleophile residues include C73 and C76. 2 disulfide bridges follow: C73–C76 and C104–C113. N-linked (GlcNAc...) asparagine glycosylation is found at N133 and N246. A disulfide bond links C396 and C408. One can recognise an ERV/ALR sulfhydryl oxidase domain in the interval 399-506 (SEPHFRGFPC…EDPHFPKVQW (108 aa)). FAD is bound by residues R404, W411, H415, D454, H458, 481–488 (WTSHNRVN), K503, and W506. A disulfide bridge links C452 with C455. C512 and C515 form a disulfide bridge. Residues 581–647 (GHEQAASAES…QENAPGQQHL (67 aa)) form a disordered region. Over residues 628-638 (ERMEDHQRDMQ) the composition is skewed to basic and acidic residues. A helical transmembrane segment spans residues 711 to 731 (ISLCVGLYSVSFMGLLAMYTY).

It belongs to the quiescin-sulfhydryl oxidase (QSOX) family. Monomer. Requires FAD as cofactor. Post-translationally, N-glycosylated. O-glycosylated on Thr and Ser residues. In terms of tissue distribution, detected in skin (at protein level). Expressed in the seminal vesicles and skin.

The protein localises to the golgi apparatus membrane. It localises to the secreted. It catalyses the reaction 2 R'C(R)SH + O2 = R'C(R)S-S(R)CR' + H2O2. Its function is as follows. Catalyzes the oxidation of sulfhydryl groups in peptide and protein thiols to disulfides with the reduction of oxygen to hydrogen peroxide. Plays a role in disulfide bond formation in a variety of extracellular proteins. In fibroblasts, required for normal incorporation of laminin into the extracellular matrix, and thereby for normal cell-cell adhesion and cell migration. This chain is Sulfhydryl oxidase 1 (Qsox1), found in Mus musculus (Mouse).